The primary structure comprises 367 residues: Phospho-N-acetylmuramoyl-pentapeptide-transferase (367 aa).

Transmembrane regions (helical) follow at residues 27–47 (VLAA…VIRW), 73–93 (TMGG…WGDL), 97–117 (YVWT…YDDW), 132–152 (WKFF…AFSA), 167–187 (TMAY…VIVG), 200–220 (GLAI…AYVT), 237–257 (AGEL…FLWF), 264–284 (VFMG…VAVI), 289–309 (IVLL…MLQV), and 344–364 (QVVV…LSTL).

The protein belongs to the glycosyltransferase 4 family. MraY subfamily. Mg(2+) is required as a cofactor.

It is found in the cell inner membrane. It carries out the reaction UDP-N-acetyl-alpha-D-muramoyl-L-alanyl-gamma-D-glutamyl-meso-2,6-diaminopimeloyl-D-alanyl-D-alanine + di-trans,octa-cis-undecaprenyl phosphate = di-trans,octa-cis-undecaprenyl diphospho-N-acetyl-alpha-D-muramoyl-L-alanyl-D-glutamyl-meso-2,6-diaminopimeloyl-D-alanyl-D-alanine + UMP. It participates in cell wall biogenesis; peptidoglycan biosynthesis. Its function is as follows. Catalyzes the initial step of the lipid cycle reactions in the biosynthesis of the cell wall peptidoglycan: transfers peptidoglycan precursor phospho-MurNAc-pentapeptide from UDP-MurNAc-pentapeptide onto the lipid carrier undecaprenyl phosphate, yielding undecaprenyl-pyrophosphoryl-MurNAc-pentapeptide, known as lipid I. The chain is Phospho-N-acetylmuramoyl-pentapeptide-transferase from Dechloromonas aromatica (strain RCB).